The chain runs to 221 residues: Ependymin-1 (221 aa).

An N-terminal signal peptide occupies residues Met1–Ala21. Asn33, Asn73, and Asn97 each carry an N-linked (GlcNAc...) asparagine glycan.

The protein belongs to the ependymin family. In terms of processing, binds calcium through the terminal sialic acids. EPDs are synthesized in the meninx and secreted in the cerebrospinal fluid.

It localises to the secreted. In terms of biological role, may play a role in neural plasticity. May be involved during axon regeneration. This Oncorhynchus mykiss (Rainbow trout) protein is Ependymin-1 (epd1).